A 360-amino-acid polypeptide reads, in one-letter code: Phospho-N-acetylmuramoyl-pentapeptide-transferase (360 aa).

Helical transmembrane passes span 26-46, 73-93, 97-117, 135-155, 168-188, 199-219, 236-256, 263-283, 288-308, and 338-358; these read AILGLLTALVFSLWWGPILIK, TMGGILILAGIFISVLLWGDL, YVLVTLFVLASFGVIGFIDDY, ALQSIAALVVAVYLYSSSTMV, IMPQLGFMFILLAYFTIVGAS, GLAIMPTVMVAAAFALIAYLS, AGELVIVCTAMVGAGLGFLWF, VFMGDVGSLALGAALGVIAIL, ILLVIMGGVFVMETVSVILQV, and VIVRFWIISLFLVLLGLATLK.

The protein belongs to the glycosyltransferase 4 family. MraY subfamily. It depends on Mg(2+) as a cofactor.

It localises to the cell inner membrane. It catalyses the reaction UDP-N-acetyl-alpha-D-muramoyl-L-alanyl-gamma-D-glutamyl-meso-2,6-diaminopimeloyl-D-alanyl-D-alanine + di-trans,octa-cis-undecaprenyl phosphate = di-trans,octa-cis-undecaprenyl diphospho-N-acetyl-alpha-D-muramoyl-L-alanyl-D-glutamyl-meso-2,6-diaminopimeloyl-D-alanyl-D-alanine + UMP. It functions in the pathway cell wall biogenesis; peptidoglycan biosynthesis. In terms of biological role, catalyzes the initial step of the lipid cycle reactions in the biosynthesis of the cell wall peptidoglycan: transfers peptidoglycan precursor phospho-MurNAc-pentapeptide from UDP-MurNAc-pentapeptide onto the lipid carrier undecaprenyl phosphate, yielding undecaprenyl-pyrophosphoryl-MurNAc-pentapeptide, known as lipid I. This Shewanella frigidimarina (strain NCIMB 400) protein is Phospho-N-acetylmuramoyl-pentapeptide-transferase.